Here is a 506-residue protein sequence, read N- to C-terminus: Maturase K (506 aa).

The protein belongs to the intron maturase 2 family. MatK subfamily.

The protein resides in the plastid. Its subcellular location is the chloroplast. In terms of biological role, usually encoded in the trnK tRNA gene intron. Probably assists in splicing its own and other chloroplast group II introns. The chain is Maturase K from Trifolium hybridum (Alsike clover).